Reading from the N-terminus, the 142-residue chain is Nucleoside diphosphate kinase (142 aa).

Lys-11, Phe-59, Arg-87, Thr-93, Arg-104, and Asn-114 together coordinate ATP. His-117 serves as the catalytic Pros-phosphohistidine intermediate.

It belongs to the NDK family. As to quaternary structure, homotetramer. Mg(2+) serves as cofactor.

The protein localises to the cytoplasm. The enzyme catalyses a 2'-deoxyribonucleoside 5'-diphosphate + ATP = a 2'-deoxyribonucleoside 5'-triphosphate + ADP. The catalysed reaction is a ribonucleoside 5'-diphosphate + ATP = a ribonucleoside 5'-triphosphate + ADP. Its function is as follows. Major role in the synthesis of nucleoside triphosphates other than ATP. The ATP gamma phosphate is transferred to the NDP beta phosphate via a ping-pong mechanism, using a phosphorylated active-site intermediate. The sequence is that of Nucleoside diphosphate kinase from Salinibacter ruber (strain DSM 13855 / M31).